The chain runs to 79 residues: Small ribosomal subunit protein bS18 (79 aa).

The protein belongs to the bacterial ribosomal protein bS18 family. As to quaternary structure, part of the 30S ribosomal subunit. Forms a tight heterodimer with protein bS6.

Functionally, binds as a heterodimer with protein bS6 to the central domain of the 16S rRNA, where it helps stabilize the platform of the 30S subunit. The chain is Small ribosomal subunit protein bS18 from Bradyrhizobium diazoefficiens (strain JCM 10833 / BCRC 13528 / IAM 13628 / NBRC 14792 / USDA 110).